An 892-amino-acid chain; its full sequence is Protein FAM193B (892 aa).

Disordered stretches follow at residues methionine 1–glutamine 78, serine 164–aspartate 192, glutamate 237–lysine 321, and aspartate 379–arginine 403. Pro residues predominate over residues alanine 28–serine 37. Basic and acidic residues predominate over residues aspartate 56–lysine 65. Low complexity predominate over residues serine 169–serine 185. 3 stretches are compositionally biased toward pro residues: residues proline 248 to proline 258, tyrosine 274 to proline 285, and serine 309 to lysine 321. Residues aspartate 379–serine 388 are compositionally biased toward acidic residues. Over residues glutamate 391 to threonine 400 the composition is skewed to low complexity. Residues asparagine 485–arginine 517 are a coiled coil. Polar residues-rich tracts occupy residues leucine 587 to glutamine 597 and threonine 610 to alanine 621. Disordered stretches follow at residues leucine 587–leucine 655 and valine 671–aspartate 837. Residues proline 637 to isoleucine 650 show a composition bias toward pro residues. Low complexity predominate over residues lysine 736–glycine 757. Phosphoserine occurs at positions 764, 776, and 882.

This sequence belongs to the FAM193 family.

The protein localises to the cytoplasm. The protein resides in the nucleus. This chain is Protein FAM193B (Fam193b), found in Mus musculus (Mouse).